Consider the following 409-residue polypeptide: Divalent metal cation transporter MntH (409 aa).

The next 11 helical transmembrane spans lie at 19-39 (LSLM…GNFA), 46-66 (ASFG…AMLI), 98-118 (WVQA…GAAI), 122-142 (LLLG…TFLI), 155-175 (LVIG…LVFS), 196-216 (AVFL…IYLH), 241-261 (IAMT…AAAF), 290-310 (IFGL…TLAG), 320-340 (FYIP…IVIL), 348-368 (ILVM…VPLL), and 388-408 (ILGK…LVSL).

It belongs to the NRAMP family.

It is found in the cell inner membrane. Its function is as follows. H(+)-stimulated, divalent metal cation uptake system. This is Divalent metal cation transporter MntH from Yersinia enterocolitica serotype O:8 / biotype 1B (strain NCTC 13174 / 8081).